The following is a 53-amino-acid chain: Natriuretic peptide DNP-2 (53 aa).

A disulfide bond links Cys-7 and Cys-23. Positions Ile-39–Ala-53 are excised as a propeptide.

This sequence belongs to the natriuretic peptide family. In terms of tissue distribution, expressed by the venom gland.

It localises to the secreted. In terms of biological role, exhibits vasodilator, natriuretic and diuretic properties in animal models and human tissues. Acts by stimulating cGMP via the natriuretic peptide receptor 1 (NPR1). Is a poor agonist of the atrial natriuretic peptide receptor 2 (NPR2). Is not degraded by neutral endopeptidase (NEP/MME). Binds to atrial natriuretic peptide clearance receptor (NPR-C/NPR3), which may be responsible of the removal of DNP from the circulation. Increases calcium uptake and induces histamine release from rat peritoneal mast cells. Increases calcium-activated potassium (KCa) current in gastric antral circular smooth muscle cells by increasing cGMP production and activating inositol trisphosphate receptors (IP3Rs). In vivo, reduces both systolic and diastolic blood pressure with no effect on heart rate, when intravenously injected in conscious rabbits. The protein is Natriuretic peptide DNP-2 of Dendroaspis angusticeps (Eastern green mamba).